We begin with the raw amino-acid sequence, 450 residues long: Tubulin alpha-6 chain (450 aa).

Gln-11, Glu-71, Gly-144, Thr-145, Thr-179, Asn-206, and Asn-228 together coordinate GTP. Position 71 (Glu-71) interacts with Mg(2+). The active site involves Glu-254. Thr-349 is modified (phosphothreonine). Residues 430–450 are disordered; that stretch reads KDYEEVGAEGGDDEDDEGEEY. Residues 431–450 are compositionally biased toward acidic residues; sequence DYEEVGAEGGDDEDDEGEEY.

Belongs to the tubulin family. As to quaternary structure, dimer of alpha and beta chains. A typical microtubule is a hollow water-filled tube with an outer diameter of 25 nm and an inner diameter of 15 nM. Alpha-beta heterodimers associate head-to-tail to form protofilaments running lengthwise along the microtubule wall with the beta-tubulin subunit facing the microtubule plus end conferring a structural polarity. Microtubules usually have 13 protofilaments but different protofilament numbers can be found in some organisms and specialized cells. Interacts with TFCB. The cofactor is Mg(2+). In terms of processing, undergoes a tyrosination/detyrosination cycle, the cyclic removal and re-addition of a C-terminal tyrosine residue by the enzymes tubulin tyrosine carboxypeptidase (TTCP) and tubulin tyrosine ligase (TTL), respectively. Acetylation of alpha chains at Lys-40 stabilizes microtubules and affects affinity and processivity of microtubule motors. This modification has a role in multiple cellular functions, ranging from cell motility, cell cycle progression or cell differentiation to intracellular trafficking and signaling.

Its subcellular location is the cytoplasm. The protein localises to the cytoskeleton. It carries out the reaction GTP + H2O = GDP + phosphate + H(+). Functionally, tubulin is the major constituent of microtubules, a cylinder consisting of laterally associated linear protofilaments composed of alpha- and beta-tubulin heterodimers. Microtubules grow by the addition of GTP-tubulin dimers to the microtubule end, where a stabilizing cap forms. Below the cap, tubulin dimers are in GDP-bound state, owing to GTPase activity of alpha-tubulin. This Arabidopsis thaliana (Mouse-ear cress) protein is Tubulin alpha-6 chain (TUBA6).